Consider the following 60-residue polypeptide: Small ribosomal subunit protein eS31 (60 aa).

Zn(2+)-binding residues include C27, C30, C45, and C48. The C4-type zinc finger occupies 27–48 (CPRCGPGVFMAEHLNRYACGKC).

Belongs to the eukaryotic ribosomal protein eS31 family. In terms of assembly, part of the 30S ribosomal subunit. Zn(2+) serves as cofactor.

The sequence is that of Small ribosomal subunit protein eS31 from Methanocaldococcus jannaschii (strain ATCC 43067 / DSM 2661 / JAL-1 / JCM 10045 / NBRC 100440) (Methanococcus jannaschii).